Reading from the N-terminus, the 344-residue chain is Phosphate acyltransferase (344 aa).

Belongs to the PlsX family. As to quaternary structure, homodimer. Probably interacts with PlsY.

It is found in the cytoplasm. The enzyme catalyses a fatty acyl-[ACP] + phosphate = an acyl phosphate + holo-[ACP]. It participates in lipid metabolism; phospholipid metabolism. Catalyzes the reversible formation of acyl-phosphate (acyl-PO(4)) from acyl-[acyl-carrier-protein] (acyl-ACP). This enzyme utilizes acyl-ACP as fatty acyl donor, but not acyl-CoA. This chain is Phosphate acyltransferase, found in Actinobacillus pleuropneumoniae serotype 5b (strain L20).